The following is a 426-amino-acid chain: D-tagatose-1,6-bisphosphate aldolase subunit KbaZ (426 aa).

Belongs to the GatZ/KbaZ family. KbaZ subfamily. As to quaternary structure, forms a complex with KbaY.

The protein operates within carbohydrate metabolism; D-tagatose 6-phosphate degradation; D-glyceraldehyde 3-phosphate and glycerone phosphate from D-tagatose 6-phosphate: step 2/2. Component of the tagatose-1,6-bisphosphate aldolase KbaYZ that is required for full activity and stability of the Y subunit. Could have a chaperone-like function for the proper and stable folding of KbaY. When expressed alone, KbaZ does not show any aldolase activity. This Escherichia coli (strain SMS-3-5 / SECEC) protein is D-tagatose-1,6-bisphosphate aldolase subunit KbaZ.